Here is an 89-residue protein sequence, read N- to C-terminus: Acylphosphatase (89 aa).

Positions 3–88 (TLHLQIEGRV…GEYSGFEKRS (86 aa)) constitute an Acylphosphatase-like domain. Residues arginine 18 and asparagine 36 contribute to the active site.

The protein belongs to the acylphosphatase family.

It carries out the reaction an acyl phosphate + H2O = a carboxylate + phosphate + H(+). The protein is Acylphosphatase (acyP) of Thiobacillus denitrificans (strain ATCC 25259 / T1).